A 177-amino-acid polypeptide reads, in one-letter code: RNA pyrophosphohydrolase (177 aa).

In terms of domain architecture, Nudix hydrolase spans 6–149 (GYRPNVGIVI…KRDVYRRVMK (144 aa)). The Nudix box motif lies at 38 to 59 (GGINPGESAEQAMYRELFEEVG).

This sequence belongs to the Nudix hydrolase family. RppH subfamily. A divalent metal cation is required as a cofactor.

Accelerates the degradation of transcripts by removing pyrophosphate from the 5'-end of triphosphorylated RNA, leading to a more labile monophosphorylated state that can stimulate subsequent ribonuclease cleavage. The chain is RNA pyrophosphohydrolase from Pectobacterium carotovorum subsp. carotovorum (strain PC1).